A 78-amino-acid polypeptide reads, in one-letter code: Sec-independent protein translocase protein TatA (78 aa).

The chain crosses the membrane as a helical span at residues 1-21; the sequence is MGGISIWQLLIIAVIVVLLFG. The segment covering 47–59 has biased composition (basic and acidic residues); sequence ESEKKDADFEPKS. Residues 47–78 are disordered; it reads ESEKKDADFEPKSLEQQSKQAATESKKDKEQA. A compositionally biased stretch (polar residues) spans 60 to 69; the sequence is LEQQSKQAAT.

It belongs to the TatA/E family. In terms of assembly, the Tat system comprises two distinct complexes: a TatABC complex, containing multiple copies of TatA, TatB and TatC subunits, and a separate TatA complex, containing only TatA subunits. Substrates initially bind to the TatABC complex, which probably triggers association of the separate TatA complex to form the active translocon.

It localises to the cell inner membrane. Part of the twin-arginine translocation (Tat) system that transports large folded proteins containing a characteristic twin-arginine motif in their signal peptide across membranes. TatA could form the protein-conducting channel of the Tat system. This is Sec-independent protein translocase protein TatA from Vibrio vulnificus (strain CMCP6).